A 441-amino-acid polypeptide reads, in one-letter code: Nuclear distribution protein nudF (441 aa).

In terms of domain architecture, LisH spans 9 to 41 (QAEELHKSIIAYLASVNLTESSAALRAELGDSV). WD repeat units follow at residues 87–128 (GHRE…RTVK), 130–170 (HTKA…KNIR), 174–221 (GHDH…CVKT), 224–263 (GHVD…TKST), 266–326 (GHEH…IKTL), 328–367 (GHDN…KCVR), 372–402 (AHGH…NGAP), and 403–440 (AATA…RIFA). The tract at residues 390 to 415 (GGANGESETNGAPAATATTNGVRPDP) is disordered. The segment covering 398–410 (TNGAPAATATTNG) has biased composition (low complexity).

Belongs to the WD repeat LIS1/nudF family. Self-associates. Interacts with nudE and dynein.

Its subcellular location is the cytoplasm. The protein localises to the cytoskeleton. It localises to the spindle pole. Functionally, positively regulates the activity of the minus-end directed microtubule motor protein dynein. May enhance dynein-mediated microtubule sliding by targeting dynein to the microtubule plus end. Required for nuclear migration during vegetative growth as well as development. Required for retrograde early endosome (EE) transport from the hyphal tip. Required for localization of dynein to the mitotic spindle poles. Recruits additional proteins to the dynein complex at SPBs. This is Nuclear distribution protein nudF from Neosartorya fischeri (strain ATCC 1020 / DSM 3700 / CBS 544.65 / FGSC A1164 / JCM 1740 / NRRL 181 / WB 181) (Aspergillus fischerianus).